The sequence spans 301 residues: MRVYIAHNGCLEAEPIYGTICELVAQRKMSVITDPHARNNESARNTDSGVVSLNQAGRNKYLDQETTSRSINVPFCAGISIGGDGTFLRMARDLKNTGTPLFGVNMGRMGFLVDIEPEDIVNLVENIVKGEYTEEKRLPITASVQRGGKKIHDEWAVNEITIERKVEGKVVDIEVFVDGCRVMDISCNGIIIATATGSTAYSFSSGGPIVWPEMKVTLVVPVSPHELFAKPIVLPDNRSILLKVTSRDNKVVLCSDGQVRLCLQSGDEIACHVGKVPVVFGRVKKGCFAEHLVKKFNLQTA.

D84 functions as the Proton acceptor in the catalytic mechanism. Residues 84-85 (DG), R89, 158-159 (NE), K169, N188, 199-204 (TAYSFS), and Q258 each bind NAD(+).

It belongs to the NAD kinase family. The cofactor is a divalent metal cation.

It is found in the cytoplasm. It carries out the reaction NAD(+) + ATP = ADP + NADP(+) + H(+). Functionally, involved in the regulation of the intracellular balance of NAD and NADP, and is a key enzyme in the biosynthesis of NADP. Catalyzes specifically the phosphorylation on 2'-hydroxyl of the adenosine moiety of NAD to yield NADP. The polypeptide is NAD kinase (Tropheryma whipplei (strain Twist) (Whipple's bacillus)).